A 421-amino-acid chain; its full sequence is Testin (421 aa).

Residues 92-199 enclose the PET domain; it reads MILTNPVAAK…GDVKLPCEMD (108 aa). Residues 133-164 form a disordered region; the sequence is EKQPVAGSEGAQYRKKQLAKQLPAHDQDPSKC. The segment covering 155–164 has biased composition (basic and acidic residues); that stretch reads PAHDQDPSKC. LIM zinc-binding domains follow at residues 234 to 297, 299 to 359, and 362 to 421; these read YSCY…CDSE, PRCA…NHAV, and QGCH…KMMS.

Belongs to the prickle / espinas / testin family. Interacts via LIM domain 1 with ZYX. Interacts (via LIM domain 3) with ENAH and VASP. Interacts with ALKBH4, talin, actin, alpha-actinin, GRIP1 and PXN. Interacts (via LIM domain 2) with ACTL7A (via N-terminus). Heterodimer with ACTL7A; the heterodimer interacts with ENAH to form a heterotrimer.

The protein localises to the cytoplasm. The protein resides in the cell junction. Its subcellular location is the focal adhesion. Functionally, scaffold protein that may play a role in cell adhesion, cell spreading and in the reorganization of the actin cytoskeleton. Plays a role in the regulation of cell proliferation. May act as a tumor suppressor. The sequence is that of Testin (TES) from Callithrix jacchus (White-tufted-ear marmoset).